A 578-amino-acid chain; its full sequence is G protein-coupled receptor kinase 4 (578 aa).

Methionine 1 is subject to N-acetylmethionine. An N-terminal region spans residues 1–154 (MELENIVANS…ECTRVAHNYL (154 aa)). The region spanning 52-172 (DYSSLCDKQP…QESSYFSQFL (121 aa)) is the RGS domain. In terms of domain architecture, Protein kinase spans 187–449 (FRHYRVLGKG…AAGVKQHPVF (263 aa)). Residues 193 to 201 (LGKGGFGEV) and lysine 216 contribute to the ATP site. Aspartate 312 (proton acceptor) is an active-site residue. Positions 450 to 515 (KDINFRRLEA…GCVSIPWQNE (66 aa)) constitute an AGC-kinase C-terminal domain. Serine 485 bears the Phosphoserine mark.

Belongs to the protein kinase superfamily. AGC Ser/Thr protein kinase family. GPRK subfamily. Interacts with DRD3. In terms of processing, palmitoylated. In terms of tissue distribution, isoform 1, isoform 2, isoform 3, and isoform 4 are expressed in testis. Isoform 4 is expressed in myometrium.

The protein resides in the cytoplasm. Its subcellular location is the cell cortex. The catalysed reaction is [G-protein-coupled receptor] + ATP = [G-protein-coupled receptor]-phosphate + ADP + H(+). Inhibited by heparin. In terms of biological role, specifically phosphorylates the activated forms of G protein-coupled receptors. GRK4-alpha can phosphorylate rhodopsin and its activity is inhibited by calmodulin; the other three isoforms do not phosphorylate rhodopsin and do not interact with calmodulin. GRK4-alpha and GRK4-gamma phosphorylate DRD3. Phosphorylates ADRB2. This is G protein-coupled receptor kinase 4 (GRK4) from Homo sapiens (Human).